The following is a 1372-amino-acid chain: Collagen alpha-2(I) chain (1372 aa).

Positions 1–22 (MLSFVDTRTLLLLAVTSCLATC) are cleaved as a signal peptide. Gln-23 is modified (pyrrolidone carboxylic acid). Positions 23-85 (QYLQSGSVRK…PPGLTGNFAA (63 aa)) are cleaved as a propeptide — N-terminal propeptide. Positions 28–1135 (GSVRKGPTGD…DQPRSQPSLR (1108 aa)) are disordered. Pro residues predominate over residues 59–77 (MGPPGPPGSPGPPGSPAPP). Allysine is present on Lys-90. Over residues 95-146 (GPGPMGLMGPRGPPGAVGAPGPQGFQGPAGEPGEPGQTGPAGPRGPAGSPGK) the composition is skewed to low complexity. The span at 147 to 161 (AGEDGHPGKPGRPGE) shows a compositional bias: basic and acidic residues. Position 183 is a 5-hydroxylysine; alternate (Lys-183). Lys-183 carries an O-linked (Gal...) hydroxylysine; alternate glycan. 7 stretches are compositionally biased toward low complexity: residues 231 to 260 (VGAPGPAGARGSDGSVGPVGPAGPIGSAGP), 285 to 299 (AGPRGEVGLPGLSGP), 306 to 327 (PGTNGLTGAKGATGLPGVAGAP), 336 to 351 (PGPAGAAGATGARGLV), 390 to 416 (PGEAGSAGPAGPPGLRGSPGSRGLPGA), 476 to 495 (LPGIDGRPGPIGPAGPRGEA), and 519 to 537 (PGLAGARGAPGPDGNNGAQ). Gly residues predominate over residues 544–553 (GVQGGKGEQG). A compositionally biased stretch (low complexity) spans 600–639 (PGESGAAGPSGPIGSRGPSGAPGPDGNKGEAGAVGAPGSA). Residues 640–649 (GASGPGGLPG) show a composition bias toward gly residues. Low complexity-rich tracts occupy residues 681–716 (RGIPGAVGAPGPAGASGDRGEAGAAGPSGPAGPRGS) and 725–743 (PAGPNGFAGPAGAAGQPGA). Over residues 744-753 (KGEKGTKGPK) the composition is skewed to basic and acidic residues. Over residues 755–771 (ENGIVGPTGSVGAAGPS) the composition is skewed to low complexity. The span at 781 to 790 (GSRGDGGPPG) shows a compositional bias: gly residues. Composition is skewed to low complexity over residues 792–801 (TGFPGAAGRT), 855–882 (SGEPGTAGAPGTAGPQGLLGAPGILGLP), 905–927 (ISGPPGARGPPGAVGSPGVNGAP), 957–978 (PGSIGPTGAAGAPGPHGSVGPA), and 987–1007 (PGPAGSVGPVGAVGPRGPSGP). The span at 1011-1022 (RGDKGEPGDKGH) shows a compositional bias: basic and acidic residues. The segment covering 1095-1107 (AGPPGPPGPPGPP) has biased composition (pro residues). The propeptide at 1126-1372 (DQPRSQPSLR…RVEVGPVCFK (247 aa)) is C-terminal propeptide. One can recognise a Fibrillar collagen NC1 domain in the interval 1139–1372 (YEVDATLKSL…RVEVGPVCFK (234 aa)). Disulfide bonds link Cys-1169–Cys-1201, Cys-1209–Cys-1370, and Cys-1278–Cys-1323. Residues Asp-1187, Asn-1189, Gln-1190, Cys-1192, and Asp-1195 each contribute to the Ca(2+) site. A glycan (N-linked (GlcNAc...) asparagine) is linked at Asn-1273.

It belongs to the fibrillar collagen family. Trimers of one alpha 2(I) and two alpha 1(I) chains. Interacts (via C-terminus) with TMEM131 (via PapD-L domain); the interaction is direct and is involved in assembly and TRAPPIII ER-to-Golgi transport complex-dependent secretion of collagen. Prolines at the third position of the tripeptide repeating unit (G-X-Y) are hydroxylated in some or all of the chains. In terms of tissue distribution, expressed in kidney glomeruli.

The protein localises to the secreted. The protein resides in the extracellular space. Its subcellular location is the extracellular matrix. Functionally, type I collagen is a member of group I collagen (fibrillar forming collagen). The chain is Collagen alpha-2(I) chain (Col1a2) from Mus musculus (Mouse).